Here is a 1029-residue protein sequence, read N- to C-terminus: Huntingtin-interacting protein 1 (1029 aa).

The ENTH domain occupies 32 to 160 (ERESFERTQT…EYHTKNPRFP (129 aa)). Position 338 is a phosphoserine (Ser338). The stretch at 375-636 (HLIERLYREI…IQEALSQLEE (262 aa)) forms a coiled coil. The segment at 410–491 (SELEAELAEQ…HADLLRKNAE (82 aa)) is pDED. Residues 763–1004 (GLDIKQEELG…ELRKKHYELA (242 aa)) enclose the I/LWEQ domain. The interval 859-916 (RWTEGLISASKAVGWGATIMVDAADLVVQGKGKFEELMVCSREIAASTAQLVAASKVK) is important for actin binding. Residues 1009–1029 (GWEEGTEASPSTVQEAIPDKE) are disordered.

Belongs to the SLA2 family. As to quaternary structure, homodimer. Binds actin. Binds HTT (via N-terminus). This interaction is restricted to the brain. Binds to IFT57. In normal conditions, it poorly interacts with IFT57, HIP1 being strongly associated with HTT. However, in mutant HTT proteins with a long poly-Gln region, interaction between HTT and HIP1 is inhibited, promoting the interaction between HIP1 and IFT57. Interacts with CLTB (via N-terminus). Interacts (via coiled coil domain) with AR. Interacts with AP2A1, AP2A2, CLTC and HIP1R. Interacts with GRIA1, GRIN2A and GRIN2B. As to expression, most abundantly expressed in brain. In brain, expressed in cortical tissue, hippocampus, the molecular layer of the cerebellum and olfactory bulb. Also expressed in spinal cord and bone marrow (at protein level). Expressed in reproductive tissues.

It is found in the cytoplasm. The protein localises to the nucleus. Its subcellular location is the endomembrane system. It localises to the cytoplasmic vesicle. The protein resides in the clathrin-coated vesicle membrane. Functionally, plays a role in clathrin-mediated endocytosis and trafficking. Involved in regulating AMPA receptor trafficking in the central nervous system in an NMDA-dependent manner. Regulates presynaptic nerve terminal activity. Enhances androgen receptor (AR)-mediated transcription. May act as a proapoptotic protein that induces cell death by acting through the intrinsic apoptosis pathway. Binds 3-phosphoinositides (via ENTH domain). May act through the ENTH domain to promote cell survival by stabilizing receptor tyrosine kinases following ligand-induced endocytosis. May play a functional role in the cell filament networks. May be required for differentiation, proliferation, and/or survival of somatic and germline progenitors. This chain is Huntingtin-interacting protein 1, found in Mus musculus (Mouse).